The chain runs to 359 residues: Bergaptol O-methyltransferase (359 aa).

Bergaptol is bound at residue histidine 126. The S-adenosyl-L-homocysteine site is built by serine 179, glycine 203, aspartate 226, aspartate 246, and lysine 260. Histidine 264 is a bergaptol binding site. The active-site Proton acceptor is histidine 264.

Belongs to the class I-like SAM-binding methyltransferase superfamily. Cation-independent O-methyltransferase family. COMT subfamily.

It carries out the reaction a 5-hydroxyfurocoumarin + S-adenosyl-L-methionine = a 5-methoxyfurocoumarin + S-adenosyl-L-homocysteine + H(+). It catalyses the reaction bergaptol + S-adenosyl-L-methionine = bergapten + S-adenosyl-L-homocysteine. Inhibited by Cu(2+), Ni(2+) and Co(2+). The protein is Bergaptol O-methyltransferase of Glehnia littoralis (Beach silvertop).